Reading from the N-terminus, the 330-residue chain is Intraflagellar transport protein 46 homolog (330 aa).

2 disordered regions span residues 1 to 21 and 55 to 112; these read MDRP…ATPR and SIKT…EGVY. A compositionally biased stretch (acidic residues) spans 7–16; it reads ETVDIPDSED. Residues 68–79 are compositionally biased toward basic and acidic residues; the sequence is SSSEKLCDRGSS. A compositionally biased stretch (acidic residues) spans 80–101; that stretch reads DDDDDDDNDDDEDEDDDDDDEN.

Belongs to the IFT46 family.

The protein localises to the cytoplasm. It localises to the cytoskeleton. It is found in the cilium basal body. The protein resides in the cell projection. Its subcellular location is the cilium. Functionally, forms part of a complex involved in intraflagellar transport (IFT), the bi-directional movement of particles required for the assembly, maintenance and functioning of primary cilia. The protein is Intraflagellar transport protein 46 homolog of Schistosoma japonicum (Blood fluke).